Here is a 7031-residue protein sequence, read N- to C-terminus: Extracellular matrix-binding protein EbhB (7031 aa).

Residues 1–39 (MNYRDKIQKFSIRKYTVGTFSTVIATLVFLGFNTSQAHA) form the signal peptide. A compositionally biased stretch (polar residues) spans 41–59 (ETNQPASVVKQKQQSNNEQ). 5 disordered regions span residues 41 to 86 (ETNQ…HENE), 99 to 152 (KVAQ…GNDN), 250 to 277 (PQRQ…PRSV), 1342 to 1373 (NNIT…ATTD), and 2418 to 2438 (TITP…TLTA). Low complexity predominate over residues 65–80 (SQVQNSQNSQNGQSLS). Positions 99–117 (KVAQSSTTNDEQPASQNVN) are enriched in polar residues. Residues 130-140 (PDKEQSKHKQN) are compositionally biased toward basic and acidic residues. 4 stretches are compositionally biased toward polar residues: residues 141-151 (ESQSANKNGND), 250-266 (PQRQ…QTRS), 1360-1373 (FRTT…ATTD), and 2427-2438 (HSVSSNPSTLTA). FIVAR domains are found at residues 2524–2580 (AKNH…VSDA), 2610–2666 (SKNN…ISDE), 2687–2750 (DTHA…VQSA), 2780–2836 (AKTK…IAAE), 2864–2919 (AKTQ…IRQN), 2947–3002 (AKNQ…INTN), 3030–3085 (AKTQ…INDK), 3154–3212 (AMTK…VNQK), 3280–3339 (AMTG…VNNA), 3407–3465 (AMGN…VNRA), 3533–3591 (AMGN…VTEA), 3659–3717 (AMNT…ITQK), 3785–3843 (AMAS…VEAA), 3911–3969 (AMGN…VEQA), 4037–4095 (AMGT…VTAA), 4163–4221 (AMKG…ITQA), 4289–4347 (QMGN…VEAA), 4415–4473 (AMAN…VENA), 4541–4599 (AMGT…INQI), 4667–4725 (AMGQ…VDRA), 4793–4851 (AMNS…VDNA), 4919–4977 (AMGA…INGM), 5045–5103 (AMTA…VNSA), 5171–5229 (AMKG…ITQV), 5297–5355 (AMHS…VEQA), 5423–5481 (AMGQ…VERA), 5549–5607 (AMTA…VTNA), 5675–5733 (AMKG…INQA), 5801–5859 (AMTN…VETA), 5927–5985 (AMSN…VEQA), 6053–6111 (AMNQ…INQK), 6179–6236 (AMGN…VQAA), 6304–6362 (AMGQ…VEAA), 6430–6488 (AMQR…VEQA), 6556–6614 (AMDQ…VTAA), 6682–6740 (AMNQ…VTQA), 6818–6866 (DKDQ…VEAA), and 6934–6992 (AMGN…VEAA).

The sequence is that of Extracellular matrix-binding protein EbhB (ebhB) from Staphylococcus aureus (strain Newman).